The chain runs to 272 residues: Ribosomal RNA small subunit methyltransferase A (272 aa).

S-adenosyl-L-methionine contacts are provided by Asn18, Leu20, Gly45, Glu66, Asp91, and Asn113.

The protein belongs to the class I-like SAM-binding methyltransferase superfamily. rRNA adenine N(6)-methyltransferase family. RsmA subfamily.

It localises to the cytoplasm. It catalyses the reaction adenosine(1518)/adenosine(1519) in 16S rRNA + 4 S-adenosyl-L-methionine = N(6)-dimethyladenosine(1518)/N(6)-dimethyladenosine(1519) in 16S rRNA + 4 S-adenosyl-L-homocysteine + 4 H(+). Functionally, specifically dimethylates two adjacent adenosines (A1518 and A1519) in the loop of a conserved hairpin near the 3'-end of 16S rRNA in the 30S particle. May play a critical role in biogenesis of 30S subunits. The protein is Ribosomal RNA small subunit methyltransferase A of Yersinia pestis bv. Antiqua (strain Antiqua).